We begin with the raw amino-acid sequence, 434 residues long: Solute carrier RCH1 (434 aa).

Topologically, residues Met-1–Ser-15 are cytoplasmic. The chain crosses the membrane as a helical span at residues Val-16 to Ala-36. The Extracellular portion of the chain corresponds to Arg-37–Lys-50. Residues Gly-51 to Met-71 form a helical membrane-spanning segment. Over Lys-72–Ala-87 the chain is Cytoplasmic. A helical transmembrane segment spans residues Thr-88–Val-108. The Extracellular segment spans residues Lys-109–Asp-118. A helical transmembrane segment spans residues Trp-119–Ile-139. Residues Met-140–Leu-149 are Cytoplasmic-facing. A helical transmembrane segment spans residues Leu-150–Val-170. Topologically, residues Gln-171–Lys-199 are extracellular. A helical transmembrane segment spans residues Gln-200–Pro-220. Residues Lys-221–His-234 are Cytoplasmic-facing. Residues Ile-235–Tyr-255 form a helical membrane-spanning segment. At Gln-256 to His-264 the chain is on the extracellular side. A helical membrane pass occupies residues Val-265–Ser-285. Topologically, residues Tyr-286–Asp-327 are cytoplasmic. A helical transmembrane segment spans residues Ala-328–Thr-348. The Extracellular portion of the chain corresponds to Ser-349–Leu-362. Residues Val-363–Phe-383 form a helical membrane-spanning segment. Residues Lys-384–Arg-434 are Cytoplasmic-facing. Phosphoserine is present on Ser-425.

This sequence belongs to the bile acid:sodium symporter (BASS) (TC 2.A.28) family.

It is found in the cell membrane. It localises to the bud neck. Functionally, solute carrier protein that negatively regulates the cytosolic calcium homeostasis in response to high levels of extracellular calcium. The protein is Solute carrier RCH1 of Saccharomyces cerevisiae (strain ATCC 204508 / S288c) (Baker's yeast).